Reading from the N-terminus, the 282-residue chain is Elongation factor Ts (282 aa).

Positions 79 to 82 (TDFV) are involved in Mg(2+) ion dislocation from EF-Tu.

It belongs to the EF-Ts family.

The protein resides in the cytoplasm. In terms of biological role, associates with the EF-Tu.GDP complex and induces the exchange of GDP to GTP. It remains bound to the aminoacyl-tRNA.EF-Tu.GTP complex up to the GTP hydrolysis stage on the ribosome. The chain is Elongation factor Ts from Shewanella sediminis (strain HAW-EB3).